Reading from the N-terminus, the 290-residue chain is 4-hydroxybenzoate octaprenyltransferase (290 aa).

Helical transmembrane passes span 33–53 (LWAL…AVFV), 99–119 (LFVV…TMTI), 141–161 (LPQV…FAAV), 163–183 (ESVP…AVAY), 213–233 (FIIG…GWLN), 237–257 (WGYY…QKLI), and 268–288 (AFMN…MSYW).

Belongs to the UbiA prenyltransferase family. The cofactor is Mg(2+).

Its subcellular location is the cell inner membrane. It carries out the reaction all-trans-octaprenyl diphosphate + 4-hydroxybenzoate = 4-hydroxy-3-(all-trans-octaprenyl)benzoate + diphosphate. Its pathway is cofactor biosynthesis; ubiquinone biosynthesis. In terms of biological role, catalyzes the prenylation of para-hydroxybenzoate (PHB) with an all-trans polyprenyl group. Mediates the second step in the final reaction sequence of ubiquinone-8 (UQ-8) biosynthesis, which is the condensation of the polyisoprenoid side chain with PHB, generating the first membrane-bound Q intermediate 3-octaprenyl-4-hydroxybenzoate. The protein is 4-hydroxybenzoate octaprenyltransferase of Escherichia fergusonii (strain ATCC 35469 / DSM 13698 / CCUG 18766 / IAM 14443 / JCM 21226 / LMG 7866 / NBRC 102419 / NCTC 12128 / CDC 0568-73).